The chain runs to 161 residues: 6,7-dimethyl-8-ribityllumazine synthase (161 aa).

5-amino-6-(D-ribitylamino)uracil is bound by residues Trp-26, 58–60 (SFE), and 81–83 (VVI). 86 to 87 (GT) contacts (2S)-2-hydroxy-3-oxobutyl phosphate. His-89 functions as the Proton donor in the catalytic mechanism. Phe-114 is a 5-amino-6-(D-ribitylamino)uracil binding site. Position 128 (Arg-128) interacts with (2S)-2-hydroxy-3-oxobutyl phosphate.

The protein belongs to the DMRL synthase family.

It catalyses the reaction (2S)-2-hydroxy-3-oxobutyl phosphate + 5-amino-6-(D-ribitylamino)uracil = 6,7-dimethyl-8-(1-D-ribityl)lumazine + phosphate + 2 H2O + H(+). It functions in the pathway cofactor biosynthesis; riboflavin biosynthesis; riboflavin from 2-hydroxy-3-oxobutyl phosphate and 5-amino-6-(D-ribitylamino)uracil: step 1/2. Its function is as follows. Catalyzes the formation of 6,7-dimethyl-8-ribityllumazine by condensation of 5-amino-6-(D-ribitylamino)uracil with 3,4-dihydroxy-2-butanone 4-phosphate. This is the penultimate step in the biosynthesis of riboflavin. In Streptomyces coelicolor (strain ATCC BAA-471 / A3(2) / M145), this protein is 6,7-dimethyl-8-ribityllumazine synthase.